A 179-amino-acid polypeptide reads, in one-letter code: Large ribosomal subunit protein uL5 (179 aa).

The protein belongs to the universal ribosomal protein uL5 family. Part of the 50S ribosomal subunit; part of the 5S rRNA/L5/L18/L25 subcomplex. Contacts the 5S rRNA and the P site tRNA. Forms a bridge to the 30S subunit in the 70S ribosome.

This is one of the proteins that bind and probably mediate the attachment of the 5S RNA into the large ribosomal subunit, where it forms part of the central protuberance. In the 70S ribosome it contacts protein S13 of the 30S subunit (bridge B1b), connecting the 2 subunits; this bridge is implicated in subunit movement. Contacts the P site tRNA; the 5S rRNA and some of its associated proteins might help stabilize positioning of ribosome-bound tRNAs. The polypeptide is Large ribosomal subunit protein uL5 (Yersinia pestis).